Reading from the N-terminus, the 528-residue chain is GMP synthase [glutamine-hydrolyzing] (528 aa).

Residues 13–204 enclose the Glutamine amidotransferase type-1 domain; that stretch reads SILILDFGSQ…VYKISCCTAD (192 aa). The active-site Nucleophile is Cys90. Active-site residues include His178 and Glu180. The region spanning 205–403 is the GMPS ATP-PPase domain; sequence WTTETYIEET…LGLPDEIIKR (199 aa). Residue 232–238 participates in ATP binding; sequence SGGVDSS.

Homodimer.

The enzyme catalyses XMP + L-glutamine + ATP + H2O = GMP + L-glutamate + AMP + diphosphate + 2 H(+). It functions in the pathway purine metabolism; GMP biosynthesis; GMP from XMP (L-Gln route): step 1/1. In terms of biological role, catalyzes the synthesis of GMP from XMP. In Prochlorococcus marinus (strain AS9601), this protein is GMP synthase [glutamine-hydrolyzing].